The chain runs to 442 residues: GTPase Der (442 aa).

EngA-type G domains follow at residues Arg-2–Asn-167 and Phe-175–Met-351. GTP is bound by residues Gly-8 to Ser-15, Asp-55 to Ile-59, Asn-119 to Glu-122, Gly-181 to Ser-188, Asp-228 to Ile-232, and Asn-293 to Asp-296. Residues Arg-352–Asn-436 enclose the KH-like domain.

It belongs to the TRAFAC class TrmE-Era-EngA-EngB-Septin-like GTPase superfamily. EngA (Der) GTPase family. As to quaternary structure, associates with the 50S ribosomal subunit.

Its function is as follows. GTPase that plays an essential role in the late steps of ribosome biogenesis. The polypeptide is GTPase Der (Ureaplasma parvum serovar 3 (strain ATCC 27815 / 27 / NCTC 11736)).